A 481-amino-acid chain; its full sequence is Probable glycine dehydrogenase (decarboxylating) subunit 2 (481 aa).

At K265 the chain carries N6-(pyridoxal phosphate)lysine.

Belongs to the GcvP family. C-terminal subunit subfamily. The glycine cleavage system is composed of four proteins: P, T, L and H. In this organism, the P 'protein' is a heterodimer of two subunits. Requires pyridoxal 5'-phosphate as cofactor.

It carries out the reaction N(6)-[(R)-lipoyl]-L-lysyl-[glycine-cleavage complex H protein] + glycine + H(+) = N(6)-[(R)-S(8)-aminomethyldihydrolipoyl]-L-lysyl-[glycine-cleavage complex H protein] + CO2. The glycine cleavage system catalyzes the degradation of glycine. The P protein binds the alpha-amino group of glycine through its pyridoxal phosphate cofactor; CO(2) is released and the remaining methylamine moiety is then transferred to the lipoamide cofactor of the H protein. The chain is Probable glycine dehydrogenase (decarboxylating) subunit 2 from Thermosipho melanesiensis (strain DSM 12029 / CIP 104789 / BI429).